The following is a 605-amino-acid chain: Alpha-fetoprotein (605 aa).

The N-terminal stretch at 1–18 (MKWITPASLILLLHFAAS) is a signal peptide. Albumin domains follow at residues 19–207 (KALH…SIAK), 208–398 (ELRE…EELQ), and 399–597 (KHIE…KLIS). Cystine bridges form between cysteine 95-cysteine 110, cysteine 109-cysteine 120, cysteine 144-cysteine 189, cysteine 188-cysteine 197, cysteine 220-cysteine 266, cysteine 265-cysteine 273, cysteine 285-cysteine 299, and cysteine 298-cysteine 309. Phosphoserine occurs at positions 107, 111, and 113. Asparagine 247 carries an N-linked (GlcNAc...) asparagine glycan. Serine 340 bears the Phosphoserine mark. 7 cysteine pairs are disulfide-bonded: cysteine 380–cysteine 389, cysteine 412–cysteine 458, cysteine 457–cysteine 468, cysteine 481–cysteine 497, cysteine 496–cysteine 507, cysteine 534–cysteine 579, and cysteine 578–cysteine 587. Serine 440 carries the phosphoserine modification. Asparagine 498 carries N-linked (GlcNAc...) asparagine glycosylation.

Belongs to the ALB/AFP/VDB family. Post-translationally, glycosylated; contains two glycans. Sulfated. As to expression, plasma.

The protein resides in the secreted. Functionally, binds estrogens, fatty acids and metals. In Mus musculus (Mouse), this protein is Alpha-fetoprotein (Afp).